The sequence spans 166 residues: 16S rRNA aminocarboxypropyltransferase (166 aa).

S-adenosyl-L-methionine is bound by residues Thr-17, Val-62, Ile-84, Tyr-99, and Ser-103.

It belongs to the TDD superfamily. TSR3 family.

The protein resides in the cytoplasm. The enzyme catalyses an N(1)-methylpseudouridine in rRNA + S-adenosyl-L-methionine = N(1)-methyl-N(3)-[(3S)-3-amino-3-carboxypropyl]pseudouridine in rRNA + S-methyl-5'-thioadenosine + H(+). Aminocarboxypropyltransferase that catalyzes the aminocarboxypropyl transfer on pseudouridine corresponding to position 914 in M.jannaschii 16S rRNA. It constitutes the last step in biosynthesis of the hypermodified N1-methyl-N3-(3-amino-3-carboxypropyl) pseudouridine (m1acp3-Psi). In Saccharolobus solfataricus (strain ATCC 35092 / DSM 1617 / JCM 11322 / P2) (Sulfolobus solfataricus), this protein is 16S rRNA aminocarboxypropyltransferase.